Here is a 402-residue protein sequence, read N- to C-terminus: Flavohemoprotein (402 aa).

The 136-residue stretch at 1-136 folds into the Globin domain; sequence MLSEKTIEIV…IADAFISIEA (136 aa). His-85 contacts heme b. Active-site charge relay system residues include Tyr-95 and Glu-135. Residues 147–402 form a reductase region; that stretch reads GGWKDFRNFV…EFFGPAASLQ (256 aa). Residues 150 to 260 form the FAD-binding FR-type domain; it reads KDFRNFVVVK…SAPAGDFVLN (111 aa). FAD-binding positions include Tyr-188 and 204 to 207; that span reads RQYS. 273–278 is a binding site for NADP(+); the sequence is GVGITP. FAD is bound at residue 394-397; that stretch reads FFGP.

Belongs to the globin family. Two-domain flavohemoproteins subfamily. This sequence in the C-terminal section; belongs to the flavoprotein pyridine nucleotide cytochrome reductase family. Requires heme b as cofactor. FAD is required as a cofactor.

The catalysed reaction is 2 nitric oxide + NADPH + 2 O2 = 2 nitrate + NADP(+) + H(+). The enzyme catalyses 2 nitric oxide + NADH + 2 O2 = 2 nitrate + NAD(+) + H(+). In terms of biological role, is involved in NO detoxification in an aerobic process, termed nitric oxide dioxygenase (NOD) reaction that utilizes O(2) and NAD(P)H to convert NO to nitrate, which protects the bacterium from various noxious nitrogen compounds. Therefore, plays a central role in the inducible response to nitrosative stress. This is Flavohemoprotein from Bacillus cereus (strain ATCC 10987 / NRS 248).